A 201-amino-acid polypeptide reads, in one-letter code: Nucleoid occlusion factor SlmA (201 aa).

Residues 14-75 (KERQQQVLEV…ALIERIEMTL (62 aa)) form the HTH tetR-type domain. The H-T-H motif DNA-binding region spans 38-57 (TTERLSKAVGVSEGALYRYF).

It belongs to the nucleoid occlusion factor SlmA family. As to quaternary structure, homodimer. Interacts with FtsZ.

It localises to the cytoplasm. The protein localises to the nucleoid. Required for nucleoid occlusion (NO) phenomenon, which prevents Z-ring formation and cell division over the nucleoid. Acts as a DNA-associated cell division inhibitor that binds simultaneously chromosomal DNA and FtsZ, and disrupts the assembly of FtsZ polymers. SlmA-DNA-binding sequences (SBS) are dispersed on non-Ter regions of the chromosome, preventing FtsZ polymerization at these regions. The protein is Nucleoid occlusion factor SlmA of Glaesserella parasuis serovar 5 (strain SH0165) (Haemophilus parasuis).